A 565-amino-acid polypeptide reads, in one-letter code: Estrogen receptor gamma (565 aa).

The modulating stretch occupies residues 1–168; that stretch reads MAVASSPEKD…TSGGKTDLHY (168 aa). NR C4-type zinc fingers lie at residues 169–189 and 205–229; these read CAVC…CEGC and CPAT…LRKC. The segment at residues 169–234 is a DNA-binding region (nuclear receptor); that stretch reads CAVCHDYASG…RLRKCYEVGM (66 aa). The segment at 235–285 is hinge; sequence TKCGMRKERGNYRSPQMRRMTRLTSQGRTDSSSVLTGSAVVSLNAPQPSAL. The 231-residue stretch at 286–516 folds into the NR LBD domain; sequence TSEQLIERLM…DLLLEMLDAH (231 aa). A disordered region spans residues 522 to 565; sequence RLPRRSPEQEPEDQADAPAPPHSSGSGPSYTWTPSSSEGAGEPQ.

The protein belongs to the nuclear hormone receptor family. NR3 subfamily. As to quaternary structure, homodimer. Abundant in the ovary and testes, barely detectable in the brain and muscle and undetectable in the liver.

It is found in the nucleus. In terms of biological role, the steroid hormones and their receptors are involved in the regulation of eukaryotic gene expression and affect cellular proliferation and differentiation in target tissues. In Micropogonias undulatus (Atlantic croaker), this protein is Estrogen receptor gamma (esr3).